Consider the following 216-residue polypeptide: Uracil phosphoribosyltransferase (216 aa).

5-phospho-alpha-D-ribose 1-diphosphate contacts are provided by residues arginine 85, arginine 110, and 135–143 (DPMVATGYS). Residues isoleucine 200 and 205–207 (GDA) contribute to the uracil site. Aspartate 206 contributes to the 5-phospho-alpha-D-ribose 1-diphosphate binding site.

This sequence belongs to the UPRTase family. Requires Mg(2+) as cofactor.

It catalyses the reaction UMP + diphosphate = 5-phospho-alpha-D-ribose 1-diphosphate + uracil. The protein operates within pyrimidine metabolism; UMP biosynthesis via salvage pathway; UMP from uracil: step 1/1. Its activity is regulated as follows. Allosterically activated by GTP. In terms of biological role, catalyzes the conversion of uracil and 5-phospho-alpha-D-ribose 1-diphosphate (PRPP) to UMP and diphosphate. The sequence is that of Uracil phosphoribosyltransferase from Burkholderia multivorans (strain ATCC 17616 / 249).